The sequence spans 622 residues: Low affinity potassium transport system protein Kup (622 aa).

Helical transmembrane passes span 9-29 (LPAITLAAIGVVYGDIGTSPL), 49-69 (VFGFLSLIFWLLIFVVSIKYL), 103-123 (VIMGLIGGSFFYGEVVITPAI), 137-157 (PQLDTWIVPLSIIVLTLLFMI), 165-185 (VGKLFAPIMLTWFLILAGLGL), 213-233 (VSFIALGAVVLSITGGEALYA), 247-267 (WFTVVLPSLTLNYFGQGALLL), 276-296 (PFFLLAPDWALIPLLIIAALA), 337-357 (IYIPFVNWMLYVAVVIVIVSF), 363-383 (LAAAYGIAVTGTMVLTSILST), 396-416 (FVALILIAFLCVDIPLFTANL), and 419-439 (LLSGGWLPLSLGTVMFIVMTT).

Belongs to the HAK/KUP transporter (TC 2.A.72) family.

It is found in the cell inner membrane. It catalyses the reaction K(+)(in) + H(+)(in) = K(+)(out) + H(+)(out). Functionally, responsible for the low-affinity transport of potassium into the cell. Likely operates as a K(+):H(+) symporter. The chain is Low affinity potassium transport system protein Kup from Escherichia coli O157:H7 (strain EC4115 / EHEC).